Consider the following 445-residue polypeptide: Probable fructoselysine/psicoselysine transporter FrlA (445 aa).

12 helical membrane passes run 10-30, 38-58, 93-113, 121-141, 155-175, 181-201, 236-256, 273-293, 334-354, 355-375, 389-410, and 417-435; these read LGFW…GIFV, AAGT…IVIP, GWAS…LAIV, PIDP…FMLL, LITI…IFWF, AAPT…LAGI, CLLV…LMPF, IPAL…IVIL, IILQ…TSLL, GYFT…IIWC, AFGL…STFV, and LICA…AFWA.

It belongs to the amino acid-polyamine-organocation (APC) superfamily.

Its subcellular location is the cell inner membrane. The catalysed reaction is N(6)-(D-fructosyl)-L-lysine(in) = N(6)-(D-fructosyl)-L-lysine(out). The enzyme catalyses N(6)-(D-psicosyl)-L-lysine(in) = N(6)-(D-psicosyl)-L-lysine(out). The protein operates within carbohydrate metabolism; fructoselysine degradation. Its function is as follows. Is likely involved in the transport of fructoselysine and psicoselysine to the cytoplasm, where they are degraded. The chain is Probable fructoselysine/psicoselysine transporter FrlA from Escherichia coli (strain K12).